A 137-amino-acid chain; its full sequence is Small ribosomal subunit protein uS12 (137 aa).

Asp102 carries the 3-methylthioaspartic acid modification.

Belongs to the universal ribosomal protein uS12 family. As to quaternary structure, part of the 30S ribosomal subunit. Contacts proteins S8 and S17. May interact with IF1 in the 30S initiation complex.

With S4 and S5 plays an important role in translational accuracy. Functionally, interacts with and stabilizes bases of the 16S rRNA that are involved in tRNA selection in the A site and with the mRNA backbone. Located at the interface of the 30S and 50S subunits, it traverses the body of the 30S subunit contacting proteins on the other side and probably holding the rRNA structure together. The combined cluster of proteins S8, S12 and S17 appears to hold together the shoulder and platform of the 30S subunit. This chain is Small ribosomal subunit protein uS12, found in Mycoplasmopsis agalactiae (strain NCTC 10123 / CIP 59.7 / PG2) (Mycoplasma agalactiae).